The primary structure comprises 165 residues: Probable deoxyuridine 5'-triphosphate nucleotidohydrolase (165 aa).

Over residues 39–49 the composition is skewed to basic and acidic residues; the sequence is GRIDTDGKTIG. The segment at 39–64 is disordered; the sequence is GRIDTDGKTIGDRSPVTPTADEDSTD.

It belongs to the dCTP deaminase family. Archaeal dUTPase subfamily.

The enzyme catalyses dUTP + H2O = dUMP + diphosphate + H(+). It functions in the pathway pyrimidine metabolism; dUMP biosynthesis; dUMP from dCTP (dUTP route): step 2/2. This enzyme is involved in nucleotide metabolism: it produces dUMP, the immediate precursor of thymidine nucleotides and it decreases the intracellular concentration of dUTP so that uracil cannot be incorporated into DNA. The chain is Probable deoxyuridine 5'-triphosphate nucleotidohydrolase from Halobacterium salinarum (strain ATCC 29341 / DSM 671 / R1).